The primary structure comprises 479 residues: MDYFGPHIFGYLIALLHFLGLIAAIHAVLTVRTAQGAIAWALSLLFMPYLTLIPYLVFGRSTFDAYIQARRQANVEMHKAINELNWRPWVEEALTARASKAYASLRAMPKLGRMPCLANNQVRLLVNGDATFEAIFNAIRRSHKAVLIQFFIIHDDDLGRRLQRLLLEKAAEGVSIHLLYDRIGSHSLPASYVQTLRDAGVQVHAFATRSGWLNRFQVNFRNHRKIVVVDGMLGFVGGHNVGDEYLGKKPPLAPWRDTHVQVSGPVVACLQESFAEDWFWAARELPPLILPDTYPDDGVLCQLLASGPADAYETCSLFFVEAIHAATERVWITSPYFIPDEAVFAALRLAVLRDVDVRILLPARPDHRIVYAASSLYAFEAVRAGVRVFRYQPGFLHQKVVLIDNEISAIGSANLDNRSFRLNFEVMLLTVDDDFATEVEHMLEADFAKAREIAKEESRQTHRLQQLGMRVARLISPIL.

Transmembrane regions (helical) follow at residues 8–28 and 38–58; these read IFGY…IHAV and IAWA…YLVF. 2 consecutive PLD phosphodiesterase domains span residues 218 to 245 and 392 to 419; these read VNFR…GDEY and QPGF…DNRS. Residues H223, K225, D230, H397, K399, and D404 contribute to the active site.

The protein belongs to the phospholipase D family. Cardiolipin synthase subfamily. ClsA sub-subfamily.

The protein resides in the cell inner membrane. The catalysed reaction is 2 a 1,2-diacyl-sn-glycero-3-phospho-(1'-sn-glycerol) = a cardiolipin + glycerol. Catalyzes the reversible phosphatidyl group transfer from one phosphatidylglycerol molecule to another to form cardiolipin (CL) (diphosphatidylglycerol) and glycerol. The sequence is that of Cardiolipin synthase A from Pseudomonas fluorescens (strain ATCC BAA-477 / NRRL B-23932 / Pf-5).